The chain runs to 465 residues: Uronate isomerase (465 aa).

It belongs to the metallo-dependent hydrolases superfamily. Uronate isomerase family.

It carries out the reaction D-glucuronate = D-fructuronate. It catalyses the reaction aldehydo-D-galacturonate = keto-D-tagaturonate. Its pathway is carbohydrate metabolism; pentose and glucuronate interconversion. This is Uronate isomerase from Bacillus velezensis (strain DSM 23117 / BGSC 10A6 / LMG 26770 / FZB42) (Bacillus amyloliquefaciens subsp. plantarum).